A 236-amino-acid polypeptide reads, in one-letter code: Phosphoglycolate phosphatase (236 aa).

Asp14 acts as the Nucleophile in catalysis. Asp14, Asp16, and Asp177 together coordinate Mg(2+).

Belongs to the HAD-like hydrolase superfamily. CbbY/CbbZ/Gph/YieH family. It depends on Mg(2+) as a cofactor.

It catalyses the reaction 2-phosphoglycolate + H2O = glycolate + phosphate. Its pathway is organic acid metabolism; glycolate biosynthesis; glycolate from 2-phosphoglycolate: step 1/1. Functionally, specifically catalyzes the dephosphorylation of 2-phosphoglycolate. Is involved in the dissimilation of the intracellular 2-phosphoglycolate formed during the DNA repair of 3'-phosphoglycolate ends, a major class of DNA lesions induced by oxidative stress. This Neisseria gonorrhoeae (strain ATCC 700825 / FA 1090) protein is Phosphoglycolate phosphatase.